The chain runs to 116 residues: Putative iron-sulfur cluster insertion protein ErpA (116 aa).

3 residues coordinate iron-sulfur cluster: Cys44, Cys108, and Cys110.

The protein belongs to the HesB/IscA family. As to quaternary structure, homodimer. Iron-sulfur cluster serves as cofactor.

In terms of biological role, required for insertion of 4Fe-4S clusters. This Aromatoleum aromaticum (strain DSM 19018 / LMG 30748 / EbN1) (Azoarcus sp. (strain EbN1)) protein is Putative iron-sulfur cluster insertion protein ErpA.